A 445-amino-acid polypeptide reads, in one-letter code: tRNA modification GTPase MnmE (445 aa).

Positions 20, 79, and 119 each coordinate (6S)-5-formyl-5,6,7,8-tetrahydrofolate. The TrmE-type G domain occupies 215–371 (GLKLAIIGPP…ILKNIENIAE (157 aa)). Asn-225 contacts K(+). GTP is bound by residues 225 to 230 (NVGKSS), 244 to 250 (SNIAGTT), and 269 to 272 (DTAG). Mg(2+) is bound at residue Ser-229. 3 residues coordinate K(+): Ser-244, Ile-246, and Thr-249. Thr-250 is a binding site for Mg(2+). (6S)-5-formyl-5,6,7,8-tetrahydrofolate is bound at residue Lys-445.

Belongs to the TRAFAC class TrmE-Era-EngA-EngB-Septin-like GTPase superfamily. TrmE GTPase family. Homodimer. Heterotetramer of two MnmE and two MnmG subunits. K(+) is required as a cofactor.

It localises to the cytoplasm. Functionally, exhibits a very high intrinsic GTPase hydrolysis rate. Involved in the addition of a carboxymethylaminomethyl (cmnm) group at the wobble position (U34) of certain tRNAs, forming tRNA-cmnm(5)s(2)U34. This is tRNA modification GTPase MnmE from Rickettsia rickettsii (strain Iowa).